The sequence spans 754 residues: Glutathione biosynthesis bifunctional protein GshAB (754 aa).

Positions 1-332 are glutamate--cysteine ligase; the sequence is MTLNQLLQKL…QGHALNEKIA (332 aa). Positions 488–746 constitute an ATP-grasp domain; it reads KKILADAGFP…ITTKILDKLF (259 aa). 515 to 573 contributes to the ATP binding site; that stretch reads PLIKDKQIVVKPKSTNFGLGISIFQEPASLDNYQKALEIAFAEDTSVLVEEFIPGTEYR. Residues Asp-695, Glu-716, and Asn-718 each contribute to the Mg(2+) site. Residues Asp-695, Glu-716, and Asn-718 each contribute to the Mn(2+) site.

In the N-terminal section; belongs to the glutamate--cysteine ligase type 1 family. Type 2 subfamily. As to quaternary structure, monomer. Mg(2+) serves as cofactor. It depends on Mn(2+) as a cofactor.

The enzyme catalyses L-cysteine + L-glutamate + ATP = gamma-L-glutamyl-L-cysteine + ADP + phosphate + H(+). The catalysed reaction is gamma-L-glutamyl-L-cysteine + glycine + ATP = glutathione + ADP + phosphate + H(+). It functions in the pathway sulfur metabolism; glutathione biosynthesis; glutathione from L-cysteine and L-glutamate: step 1/2. The protein operates within sulfur metabolism; glutathione biosynthesis; glutathione from L-cysteine and L-glutamate: step 2/2. In terms of biological role, synthesizes glutathione from L-glutamate and L-cysteine via gamma-L-glutamyl-L-cysteine. This is Glutathione biosynthesis bifunctional protein GshAB from Streptococcus thermophilus (strain CNRZ 1066).